The following is a 122-amino-acid chain: Large ribosomal subunit protein bL12 (122 aa).

It belongs to the bacterial ribosomal protein bL12 family. In terms of assembly, homodimer. Part of the ribosomal stalk of the 50S ribosomal subunit. Forms a multimeric L10(L12)X complex, where L10 forms an elongated spine to which 2 to 4 L12 dimers bind in a sequential fashion. Binds GTP-bound translation factors.

Functionally, forms part of the ribosomal stalk which helps the ribosome interact with GTP-bound translation factors. Is thus essential for accurate translation. This is Large ribosomal subunit protein bL12 from Lacticaseibacillus casei (strain BL23) (Lactobacillus casei).